We begin with the raw amino-acid sequence, 258 residues long: tRNA pseudouridine synthase A (258 aa).

The active-site Nucleophile is the Asp53. Residue Tyr111 participates in substrate binding.

The protein belongs to the tRNA pseudouridine synthase TruA family. In terms of assembly, homodimer.

The enzyme catalyses uridine(38/39/40) in tRNA = pseudouridine(38/39/40) in tRNA. In terms of biological role, formation of pseudouridine at positions 38, 39 and 40 in the anticodon stem and loop of transfer RNAs. The polypeptide is tRNA pseudouridine synthase A (Streptococcus agalactiae serotype Ia (strain ATCC 27591 / A909 / CDC SS700)).